Here is a 78-residue protein sequence, read N- to C-terminus: Putative DNA-binding protein MT0521 (78 aa).

The H-T-H motif DNA-binding region spans 24 to 45 (LLTVAEVAALMRVSKMTVYRLV).

The protein is Putative DNA-binding protein MT0521 of Mycobacterium tuberculosis (strain CDC 1551 / Oshkosh).